We begin with the raw amino-acid sequence, 195 residues long: uncharacterized protein (195 aa).

Residues 143–195 (NKLIETINTNRTNNTDNKSTKSKKQTETKKSLRTNKIVKQPINKSKKNIREEY) form a disordered region. A compositionally biased stretch (low complexity) spans 148-159 (TINTNRTNNTDN).

This is an uncharacterized protein from Acanthamoeba polyphaga (Amoeba).